Here is a 200-residue protein sequence, read N- to C-terminus: Ubiquinol-cytochrome-c reductase complex assembly factor 1 (200 aa).

Belongs to the CBP3 family.

Its subcellular location is the mitochondrion inner membrane. Its function is as follows. Required for the assembly of the ubiquinol-cytochrome c reductase complex (mitochondrial respiratory chain complex III or cytochrome b-c1 complex). May be involved in cytochrome b translation and/or stability. The chain is Ubiquinol-cytochrome-c reductase complex assembly factor 1 (uqcc1) from Xenopus laevis (African clawed frog).